The chain runs to 211 residues: Probable calcium-binding protein CML11 (211 aa).

Disordered regions lie at residues 1-22 and 40-60; these read MSEP…AAAT and SCSA…LGDD. Residues 44 to 53 show a composition bias toward low complexity; it reads QQQQQQQQQQ. 4 EF-hand domains span residues 60–95, 96–131, 136–171, and 172–207; these read DQLG…LGLK, PSTD…ELLY, YSED…LGHA, and LTVK…AAFD. Ca(2+) contacts are provided by aspartate 73, asparagine 75, aspartate 77, serine 79, glutamate 84, aspartate 109, asparagine 111, asparagine 113, glutamate 120, aspartate 149, aspartate 151, asparagine 153, glutamate 160, aspartate 185, aspartate 187, aspartate 189, arginine 191, and glutamate 196.

Functionally, potential calcium sensor. This is Probable calcium-binding protein CML11 (CML11) from Oryza sativa subsp. japonica (Rice).